Here is a 62-residue protein sequence, read N- to C-terminus: UPF0434 protein FTM_0733 (62 aa).

This sequence belongs to the UPF0434 family.

In Francisella tularensis subsp. mediasiatica (strain FSC147), this protein is UPF0434 protein FTM_0733.